We begin with the raw amino-acid sequence, 159 residues long: Cyclic pyranopterin monophosphate synthase (159 aa).

Substrate-binding positions include 76 to 78 (MCH) and 114 to 115 (ME). Aspartate 129 is a catalytic residue.

The protein belongs to the MoaC family. As to quaternary structure, homohexamer; trimer of dimers.

It carries out the reaction (8S)-3',8-cyclo-7,8-dihydroguanosine 5'-triphosphate = cyclic pyranopterin phosphate + diphosphate. It participates in cofactor biosynthesis; molybdopterin biosynthesis. Its function is as follows. Catalyzes the conversion of (8S)-3',8-cyclo-7,8-dihydroguanosine 5'-triphosphate to cyclic pyranopterin monophosphate (cPMP). The chain is Cyclic pyranopterin monophosphate synthase from Natranaerobius thermophilus (strain ATCC BAA-1301 / DSM 18059 / JW/NM-WN-LF).